The sequence spans 78 residues: Large ribosomal subunit protein bL28 (78 aa).

Belongs to the bacterial ribosomal protein bL28 family.

The polypeptide is Large ribosomal subunit protein bL28 (Pseudomonas aeruginosa (strain LESB58)).